Here is a 540-residue protein sequence, read N- to C-terminus: Chaperonin GroEL (540 aa).

ATP contacts are provided by residues 29–32, 86–90, Gly413, 476–478, and Asp492; these read TLGP, DGTTT, and NAA.

The protein belongs to the chaperonin (HSP60) family. As to quaternary structure, forms a cylinder of 14 subunits composed of two heptameric rings stacked back-to-back. Interacts with the co-chaperonin GroES.

It localises to the cytoplasm. The enzyme catalyses ATP + H2O + a folded polypeptide = ADP + phosphate + an unfolded polypeptide.. Together with its co-chaperonin GroES, plays an essential role in assisting protein folding. The GroEL-GroES system forms a nano-cage that allows encapsulation of the non-native substrate proteins and provides a physical environment optimized to promote and accelerate protein folding. The chain is Chaperonin GroEL from Tsukamurella paurometabola (Corynebacterium paurometabolum).